The sequence spans 488 residues: ATP synthase subunit beta, chloroplastic (488 aa).

Residue glycine 170–threonine 177 coordinates ATP.

This sequence belongs to the ATPase alpha/beta chains family. As to quaternary structure, F-type ATPases have 2 components, CF(1) - the catalytic core - and CF(0) - the membrane proton channel. CF(1) has five subunits: alpha(3), beta(3), gamma(1), delta(1), epsilon(1). CF(0) has four main subunits: a(1), b(1), b'(1) and c(9-12).

Its subcellular location is the plastid. The protein localises to the chloroplast thylakoid membrane. It catalyses the reaction ATP + H2O + 4 H(+)(in) = ADP + phosphate + 5 H(+)(out). Its function is as follows. Produces ATP from ADP in the presence of a proton gradient across the membrane. The catalytic sites are hosted primarily by the beta subunits. The protein is ATP synthase subunit beta, chloroplastic of Picea abies (Norway spruce).